A 526-amino-acid chain; its full sequence is Adenylosuccinate synthetase (526 aa).

Residues 102–108 (GDEGKGK) and 130–132 (GHT) each bind GTP. The Proton acceptor role is filled by D103. Mg(2+) contacts are provided by D103 and G130. IMP-binding positions include 103–106 (DEGK), 128–131 (NAGH), T219, R233, N310, T325, and R392. The active-site Proton donor is H131. Position 388-394 (388-394 (TTTGRTR)) interacts with substrate. GTP contacts are provided by residues R394, 420–422 (KVD), and 502–504 (GVG).

The protein belongs to the adenylosuccinate synthetase family. As to quaternary structure, homodimer. Requires Mg(2+) as cofactor.

It is found in the cytoplasm. The enzyme catalyses IMP + L-aspartate + GTP = N(6)-(1,2-dicarboxyethyl)-AMP + GDP + phosphate + 2 H(+). Its pathway is purine metabolism; AMP biosynthesis via de novo pathway; AMP from IMP: step 1/2. Its function is as follows. Plays an important role in the de novo pathway and in the salvage pathway of purine nucleotide biosynthesis. Catalyzes the first committed step in the biosynthesis of AMP from IMP. The sequence is that of Adenylosuccinate synthetase from Phaeodactylum tricornutum (strain CCAP 1055/1).